We begin with the raw amino-acid sequence, 120 residues long: Large ribosomal subunit protein bL19 (120 aa).

Belongs to the bacterial ribosomal protein bL19 family.

Functionally, this protein is located at the 30S-50S ribosomal subunit interface and may play a role in the structure and function of the aminoacyl-tRNA binding site. The sequence is that of Large ribosomal subunit protein bL19 from Dichelobacter nodosus (strain VCS1703A).